The following is a 257-amino-acid chain: Phosphonates import ATP-binding protein PhnC (257 aa).

The 245-residue stretch at 2–246 folds into the ABC transporter domain; the sequence is IEFRNVSKVY…KFAEIYGDVA (245 aa). Residue 35 to 42 coordinates ATP; the sequence is GLSGAGKS.

It belongs to the ABC transporter superfamily. Phosphonates importer (TC 3.A.1.9.1) family. As to quaternary structure, the complex is composed of two ATP-binding proteins (PhnC), two transmembrane proteins (PhnE) and a solute-binding protein (PhnD).

The protein resides in the cell membrane. It carries out the reaction phosphonate(out) + ATP + H2O = phosphonate(in) + ADP + phosphate + H(+). Functionally, part of the ABC transporter complex PhnCDE involved in phosphonates import. Responsible for energy coupling to the transport system. This is Phosphonates import ATP-binding protein PhnC from Bacillus cereus (strain ZK / E33L).